The following is a 182-amino-acid chain: Peptidyl-prolyl cis-trans isomerase H (182 aa).

The 167-residue stretch at 15 to 181 (FFDITIGGEP…LDVVISQCGE (167 aa)) folds into the PPIase cyclophilin-type domain.

It belongs to the cyclophilin-type PPIase family. PPIase H subfamily.

The protein resides in the nucleus. It carries out the reaction [protein]-peptidylproline (omega=180) = [protein]-peptidylproline (omega=0). Functionally, PPIases accelerate the folding of proteins. It catalyzes the cis-trans isomerization of proline imidic peptide bonds in oligopeptides. This chain is Peptidyl-prolyl cis-trans isomerase H (CYP3), found in Gibberella zeae (strain ATCC MYA-4620 / CBS 123657 / FGSC 9075 / NRRL 31084 / PH-1) (Wheat head blight fungus).